We begin with the raw amino-acid sequence, 356 residues long: Chorismate synthase (356 aa).

Arg44 contributes to the NADP(+) binding site. FMN contacts are provided by residues 121 to 123 (HFS), Gly278, 293 to 297 (KPTPS), and Arg320.

This sequence belongs to the chorismate synthase family. Requires FMNH2 as cofactor.

The catalysed reaction is 5-O-(1-carboxyvinyl)-3-phosphoshikimate = chorismate + phosphate. It functions in the pathway metabolic intermediate biosynthesis; chorismate biosynthesis; chorismate from D-erythrose 4-phosphate and phosphoenolpyruvate: step 7/7. Its function is as follows. Catalyzes the anti-1,4-elimination of the C-3 phosphate and the C-6 proR hydrogen from 5-enolpyruvylshikimate-3-phosphate (EPSP) to yield chorismate, which is the branch point compound that serves as the starting substrate for the three terminal pathways of aromatic amino acid biosynthesis. This reaction introduces a second double bond into the aromatic ring system. The chain is Chorismate synthase from Pyrococcus abyssi (strain GE5 / Orsay).